The sequence spans 401 residues: Probable trafficking protein particle complex subunit 13 homolog (401 aa).

Belongs to the TRAPPC13 family.

The chain is Probable trafficking protein particle complex subunit 13 homolog from Caenorhabditis briggsae.